A 551-amino-acid chain; its full sequence is Seed biotin-containing protein SBP65 (551 aa).

A compositionally biased stretch (basic and acidic residues) spans 1–20; the sequence is MASEQLSRRENITTERKIQN. Residues 1-29 form a disordered region; sequence MASEQLSRRENITTERKIQNAEDSVPQRT. An N6-biotinyllysine; atypical modification is found at Lys103. Residues 141–211 adopt a coiled-coil conformation; that stretch reads KGQVVEERER…RNTTQAAQEK (71 aa). Disordered stretches follow at residues 197 to 265 and 518 to 551; these read TNET…YEAT and DEVEKSMQKNIGSDSHSLDRAKHEGYRAPKNNVS. Over residues 206-219 the composition is skewed to low complexity; that stretch reads QAAQEKGEAAQAKD. Composition is skewed to polar residues over residues 223 to 242 and 250 to 265; these read EKTQQGYEMTGDTVSNSART and AKNTTLGKTQQGYEAT. The span at 533–544 shows a compositional bias: basic and acidic residues; that stretch reads HSLDRAKHEGYR.

This sequence belongs to the seed biotin-containing protein SBP65 family. In terms of tissue distribution, expressed in dry mature seeds.

Its function is as follows. May serve as a biotin source for several growth-limiting enzymes that are necessary during seed development and the subsequent germination stages, and thus may play some roles in determining seed germination capacity. This is Seed biotin-containing protein SBP65 (SBP65) from Pisum sativum (Garden pea).